A 470-amino-acid polypeptide reads, in one-letter code: Fumarate reductase 1 (470 aa).

Position 6 to 20 (6 to 20) interacts with FAD; the sequence is VVVIGTGLAGLAAAN. S66 is subject to Phosphoserine. Active-site residues include H249 and R272.

This sequence belongs to the FAD-dependent oxidoreductase 2 family. FRD/SDH subfamily. FAD serves as cofactor. Post-translationally, the N-terminus is blocked.

The protein resides in the cytoplasm. The catalysed reaction is succinate + NAD(+) = fumarate + NADH + H(+). Irreversibly catalyzes the reduction of fumarate to succinate. Together with the second isozyme of soluble fumarate reductase (OSM1), essential for anaerobic growth. Involved in maintaining redox balance. Reduction of fumarate is the main source of succinate during fermentation, and under anaerobic conditions, the formation of succinate is strictly required for the reoxidation of FADH(2). The chain is Fumarate reductase 1 (FRD1) from Saccharomyces cerevisiae (strain ATCC 204508 / S288c) (Baker's yeast).